A 318-amino-acid chain; its full sequence is Ubiquitin-like domain-containing CTD phosphatase 1 (318 aa).

Residues 3–81 (LSLIIKWGGQ…IMMMGTREES (79 aa)) enclose the Ubiquitin-like domain. The FCP1 homology domain maps to 133–294 (PREGKKLLVL…VKLSQYLKEI (162 aa)). Mg(2+) is bound by residues Asp143, Asp145, and Asp253.

Mg(2+) is required as a cofactor.

The protein localises to the nucleus. The enzyme catalyses O-phospho-L-seryl-[protein] + H2O = L-seryl-[protein] + phosphate. It carries out the reaction O-phospho-L-threonyl-[protein] + H2O = L-threonyl-[protein] + phosphate. Functionally, dephosphorylates 26S nuclear proteasomes, thereby decreasing their proteolytic activity. Recruited to the 19S regulatory particle of the 26S proteasome where it dephosphorylates 19S component psmc2 which impairs psmc2 ATPase activity and disrupts 26S proteasome assembly. Has also been reported to stimulate the proteolytic activity of the 26S proteasome. The sequence is that of Ubiquitin-like domain-containing CTD phosphatase 1 (ublcp1) from Xenopus laevis (African clawed frog).